The primary structure comprises 119 residues: Ribosome-binding factor A (119 aa).

This sequence belongs to the RbfA family. As to quaternary structure, monomer. Binds 30S ribosomal subunits, but not 50S ribosomal subunits or 70S ribosomes.

It is found in the cytoplasm. Functionally, one of several proteins that assist in the late maturation steps of the functional core of the 30S ribosomal subunit. Associates with free 30S ribosomal subunits (but not with 30S subunits that are part of 70S ribosomes or polysomes). Required for efficient processing of 16S rRNA. May interact with the 5'-terminal helix region of 16S rRNA. The chain is Ribosome-binding factor A from Chlorobium phaeovibrioides (strain DSM 265 / 1930) (Prosthecochloris vibrioformis (strain DSM 265)).